The primary structure comprises 132 residues: Small ribosomal subunit protein uS8c (132 aa).

The protein belongs to the universal ribosomal protein uS8 family. As to quaternary structure, part of the 30S ribosomal subunit.

It is found in the plastid. The protein localises to the chloroplast. In terms of biological role, one of the primary rRNA binding proteins, it binds directly to 16S rRNA central domain where it helps coordinate assembly of the platform of the 30S subunit. The polypeptide is Small ribosomal subunit protein uS8c (rps8) (Ceratophyllum demersum (Rigid hornwort)).